We begin with the raw amino-acid sequence, 255 residues long: tRNA (guanine-N(1)-)-methyltransferase (255 aa).

S-adenosyl-L-methionine is bound by residues Gly-113 and 133 to 138; that span reads VGDFVL.

Belongs to the RNA methyltransferase TrmD family. As to quaternary structure, homodimer.

The protein localises to the cytoplasm. It carries out the reaction guanosine(37) in tRNA + S-adenosyl-L-methionine = N(1)-methylguanosine(37) in tRNA + S-adenosyl-L-homocysteine + H(+). Functionally, specifically methylates guanosine-37 in various tRNAs. The chain is tRNA (guanine-N(1)-)-methyltransferase from Francisella philomiragia subsp. philomiragia (strain ATCC 25017 / CCUG 19701 / FSC 153 / O#319-036).